We begin with the raw amino-acid sequence, 413 residues long: Tryptophan synthase beta chain 2 (413 aa).

Position 107 is an N6-(pyridoxal phosphate)lysine (Lys107).

The protein belongs to the TrpB family. Tetramer of two alpha and two beta chains. Pyridoxal 5'-phosphate is required as a cofactor.

The catalysed reaction is (1S,2R)-1-C-(indol-3-yl)glycerol 3-phosphate + L-serine = D-glyceraldehyde 3-phosphate + L-tryptophan + H2O. The protein operates within amino-acid biosynthesis; L-tryptophan biosynthesis; L-tryptophan from chorismate: step 5/5. In terms of biological role, the beta subunit is responsible for the synthesis of L-tryptophan from indole and L-serine. This is Tryptophan synthase beta chain 2 (trpB2) from Nostoc sp. (strain PCC 7120 / SAG 25.82 / UTEX 2576).